The following is a 288-amino-acid chain: Bifunctional protein FolD (288 aa).

Residues 166–168 (GAS) and isoleucine 232 contribute to the NADP(+) site.

Belongs to the tetrahydrofolate dehydrogenase/cyclohydrolase family. In terms of assembly, homodimer.

It carries out the reaction (6R)-5,10-methylene-5,6,7,8-tetrahydrofolate + NADP(+) = (6R)-5,10-methenyltetrahydrofolate + NADPH. It catalyses the reaction (6R)-5,10-methenyltetrahydrofolate + H2O = (6R)-10-formyltetrahydrofolate + H(+). Its pathway is one-carbon metabolism; tetrahydrofolate interconversion. In terms of biological role, catalyzes the oxidation of 5,10-methylenetetrahydrofolate to 5,10-methenyltetrahydrofolate and then the hydrolysis of 5,10-methenyltetrahydrofolate to 10-formyltetrahydrofolate. The polypeptide is Bifunctional protein FolD (Klebsiella pneumoniae (strain 342)).